A 255-amino-acid polypeptide reads, in one-letter code: tRNA pseudouridine synthase B (255 aa).

Catalysis depends on Asp-52, which acts as the Nucleophile. Residues Tyr-80, Tyr-183, and Leu-204 each coordinate substrate.

This sequence belongs to the pseudouridine synthase TruB family. Type 1 subfamily.

The enzyme catalyses uridine(55) in tRNA = pseudouridine(55) in tRNA. Responsible for synthesis of pseudouridine from uracil-55 in the psi GC loop of transfer RNAs. The protein is tRNA pseudouridine synthase B of Blochmanniella floridana.